A 302-amino-acid polypeptide reads, in one-letter code: Hydra actinoporin-like toxin 4 (302 aa).

The N-terminal stretch at 1–17 (MLLFKLIVCFFFIFAIG) is a signal peptide. The interval 22-93 (KKDETSGENE…PAPKQTTTKK (72 aa)) is disordered. The segment covering 60–75 (KPPAAKPPAASKITKP) has biased composition (low complexity). Pro residues predominate over residues 76–86 (QVPPQKKPPAP). The short motif at 274–276 (KAG) is the Cell attachment site element.

This sequence belongs to the actinoporin family. HALT subfamily. As to quaternary structure, octamer or nonamer in membranes. Monomer in the soluble state. In vitro, interacts with folate receptor alpha (of target organism).

Its subcellular location is the nematocyst. It is found in the secreted. It localises to the target cell membrane. Pore-forming protein that forms hydrophilic pores and causes cytolysis. Compared to equinatoxin-2 (AC P61914), it reveals lower cytolysis activity (5-12-fold difference, tested on erythrocytes), a larger pore size (probably 2-3 nm) and different affinity to membrane lipids (100-fold lower affinity to sphingomyelin). Binds to sulfatides. Shows cytolytic activity on HeLa cells, with a different potency than its paralogs (from most potent to less potent: HALT-4&gt;HALT-6~HALT-1&gt;HALT-3&gt;HALT-7&gt;HALT-2). This recombinant protein has the highest cytolytic activity compared to other rHALT proteins, probably due to its longer N-terminal sequence that may penetrate the lipid bilayer more effectively. Pore formation is a multi-step process that involves specific recognition of membrane lipid by a protein aromatic residues rich region, firm binding to the membrane (mainly driven by hydrophobic interactions) accompanied by the transfer of the N-terminal region to the lipid-water interface and finally pore formation after oligomerization of monomers. In vitro, binds to the folate receptor alpha (FOLR1), a GPI-anchored membrane protein that plays a major role in the uptake of folate/folic acid into cells via endocytosis, suggesting a possible involvement of this receptor in the mechanism of HALT-1-induced cell lysis. In vivo, does not cause visible paralysis in larvae of the blowfly Sarcophaga faculata, the most common arthropod prey of Hydra. The sequence is that of Hydra actinoporin-like toxin 4 from Hydra vulgaris (Hydra).